Here is a 114-residue protein sequence, read N- to C-terminus: MRHYEVVFLVHPDQSEQVPAMIERYRGLIEENGGAIHRLEDWGRRQLAYLINKVHKAHYILMNIECDQETLKELENLFYYNDAVLRDMFIKRNEAVTEPSVMASQKEDKRRGDK.

The protein belongs to the bacterial ribosomal protein bS6 family.

Functionally, binds together with bS18 to 16S ribosomal RNA. In Hydrogenovibrio crunogenus (strain DSM 25203 / XCL-2) (Thiomicrospira crunogena), this protein is Small ribosomal subunit protein bS6.